Consider the following 176-residue polypeptide: Pituitary adenylate cyclase-activating polypeptide (176 aa).

The first 24 residues, methionine 1–serine 24, serve as a signal peptide directing secretion. Residues serine 25–glycine 79 constitute a propeptide that is removed on maturation. The segment at glutamate 39–proline 68 is disordered. Positions serine 56–proline 68 are enriched in low complexity. Residues valine 150–leucine 158 form an important for receptor binding region. The residue at position 158 (leucine 158) is a Leucine amide. Lysine 169 bears the Lysine amide mark. Residues isoleucine 173 to leucine 176 constitute a propeptide that is removed on maturation.

Belongs to the glucagon family.

It localises to the secreted. Functionally, PACAP is a neuropeptide involved in diverse array of physiological processes through activating the PACAP subfamily of class B1 G protein-coupled receptors: VIP receptor 1 (VIPR1), VIP receptor 2 (VIPR2), and PACAP type I receptor (ADCYAP1R1). Exerts neuroprotective and general cytoprotective effects due to anti-apoptotic, anti-inflammatory, and antioxidant actions. Promotes neuron projection development through the RAPGEF2/Rap1/B-Raf/ERK pathway. In chromaffin cells, induces long-lasting increase of intracellular calcium concentrations and neuroendocrine secretion. Involved in the control of glucose homeostasis, induces insulin secretion by pancreatic beta cells. PACAP exists in two bioactive forms from proteolysis of the same precursor protein, PACAP27 and PACAP38, which differ by eleven amino acid residues in the C-terminus. This chain is Pituitary adenylate cyclase-activating polypeptide, found in Homo sapiens (Human).